The chain runs to 1207 residues: RNA-binding protein 20 (1207 aa).

The disordered stretch occupies residues 1 to 58 (MVLAAAMSQDADPSGPEQPDRDACIVPGVQGPPAPQGQQGMQPLPPPLPPPPQPQSSL). Residues 43–54 (PLPPPLPPPPQP) show a composition bias toward pro residues. The U1-type zinc-finger motif lies at 412-446 (HLPHICSICDKKVFDLKDWELHVKGKLHAQKCLLF). In terms of domain architecture, RRM spans 521–596 (RVVHICNLPE…EKLLIRMSTR (76 aa)). The span at 625-637 (LREADRYGPERPR) shows a compositional bias: basic and acidic residues. 3 disordered regions span residues 625–686 (LREA…NGED), 722–896 (EKYL…MEEL), and 951–1110 (QGET…AELK). The RS stretch occupies residues 631–650 (YGPERPRSRSPMSRSLSPRS). Residues S638, S640, S643, S645, and S652 each carry the phosphoserine modification. Residues 639-650 (RSPMSRSLSPRS) are compositionally biased toward low complexity. The span at 668–686 (YAWRDEDRETVPRRENGED) shows a compositional bias: basic and acidic residues. The residue at position 729 (S729) is a Phosphoserine. Basic and acidic residues-rich tracts occupy residues 740–759 (KGREDGYHRKETKAKLDKHP), 772–789 (RKEEARLREPRHPHPEDS), and 796–836 (EPKV…RGAE). Phosphoserine is present on S789. Residues 839 to 848 (AGTEEQEGME) are compositionally biased toward acidic residues. 2 positions are modified to phosphoserine: S853 and S864. A compositionally biased stretch (polar residues) spans 853 to 863 (SVGTQQEGTES). Basic and acidic residues predominate over residues 867 to 876 (ENTRTKKGQD). 3 positions are modified to phosphoserine: S879, S881, and S963. A compositionally biased stretch (polar residues) spans 970–979 (VPSTSTSCPN). S999 bears the Phosphoserine mark. Positions 1011-1022 (YEKEARGAEGSD) are enriched in basic and acidic residues. Residues S1034, S1046, S1057, S1066, S1078, S1096, and S1101 each carry the phosphoserine modification. The segment covering 1050–1072 (DDCKARGSPEDGPHEVSPLEEKA) has biased composition (basic and acidic residues). A compositionally biased stretch (polar residues) spans 1073-1102 (SPTTESDLQSQACQENSRYTETRSLNSRSP). Residues 1141–1172 (FYCKLCGLFYTSEEAAKVSHCRSTVHYRNLQK) form a Matrin-type zinc finger. Residues 1181-1207 (GLKETEGVDSPSPERSGIGPHLERKKL) form a disordered region. Phosphoserine is present on residues S1190 and S1192.

Associates with components of the U1 and U2 U1 small nuclear ribonucleoprotein complexes. In terms of processing, phosphorylation regulates the subcellular localization. Phosphorylation of Ser-638 and Ser-640 in the RS (arginine/serine-rich) region promotes nuclear localization of the protein. In contrast, phosphorylation of the C-terminal disordered region promotes localization to cytoplasmic ribonucleoprotein granules.

The protein resides in the nucleus. The protein localises to the cytoplasm. Its subcellular location is the cytoplasmic ribonucleoprotein granule. Functionally, RNA-binding protein that acts as a regulator of mRNA splicing of a subset of genes encoding key structural proteins involved in cardiac development, such as TTN (Titin), CACNA1C, CAMK2D or PDLIM5/ENH. Acts as a repressor of mRNA splicing: specifically binds the 5'UCUU-3' motif that is predominantly found within intronic sequences of pre-mRNAs, leading to the exclusion of specific exons in target transcripts. RBM20-mediated exon skipping is hormone-dependent and is essential for TTN isoform transition in both cardiac and skeletal muscles. RBM20-mediated exon skipping of TTN provides substrates for the formation of circular RNA (circRNAs) from the TTN transcripts. Together with RBM24, promotes the expression of short isoforms of PDLIM5/ENH in cardiomyocytes. The protein is RNA-binding protein 20 of Rattus norvegicus (Rat).